The following is a 261-amino-acid chain: uncharacterized protein (261 aa).

The N-terminal stretch at 1 to 22 (MKSIKRIGLCISLLILIIFVTS) is a signal peptide. Cys-23 carries N-palmitoyl cysteine lipidation. Residue Cys-23 is the site of S-diacylglycerol cysteine attachment.

The protein belongs to the staphylococcal tandem lipoprotein family.

The protein localises to the cell membrane. This is an uncharacterized protein from Staphylococcus aureus (strain USA300).